The primary structure comprises 143 residues: Transcriptional regulator MraZ (143 aa).

SpoVT-AbrB domains follow at residues 5-47 (QYEH…SLEE) and 76-119 (AVEC…SKEV).

This sequence belongs to the MraZ family. In terms of assembly, forms oligomers.

Its subcellular location is the cytoplasm. The protein resides in the nucleoid. This chain is Transcriptional regulator MraZ, found in Thermoanaerobacter pseudethanolicus (strain ATCC 33223 / 39E) (Clostridium thermohydrosulfuricum).